We begin with the raw amino-acid sequence, 282 residues long: 4-diphosphocytidyl-2-C-methyl-D-erythritol kinase (282 aa).

K9 is a catalytic residue. 98-108 (PMGGGLGGGSS) contacts ATP. The active site involves D140.

It belongs to the GHMP kinase family. IspE subfamily. In terms of assembly, homodimer.

It carries out the reaction 4-CDP-2-C-methyl-D-erythritol + ATP = 4-CDP-2-C-methyl-D-erythritol 2-phosphate + ADP + H(+). It participates in isoprenoid biosynthesis; isopentenyl diphosphate biosynthesis via DXP pathway; isopentenyl diphosphate from 1-deoxy-D-xylulose 5-phosphate: step 3/6. Functionally, catalyzes the phosphorylation of the position 2 hydroxy group of 4-diphosphocytidyl-2C-methyl-D-erythritol. The polypeptide is 4-diphosphocytidyl-2-C-methyl-D-erythritol kinase (Salmonella paratyphi B (strain ATCC BAA-1250 / SPB7)).